A 313-amino-acid chain; its full sequence is Lactamase-like protein ptaB (313 aa).

4 residues coordinate Zn(2+): histidine 104, histidine 106, aspartate 108, and histidine 109. Aspartate 108 functions as the Proton donor/acceptor in the catalytic mechanism.

Belongs to the metallo-beta-lactamase superfamily. Zn(2+) is required as a cofactor.

It catalyses the reaction atrochrysone carboxyl-[ACP] + H2O = atrochrysone carboxylate + holo-[ACP] + H(+). It functions in the pathway secondary metabolite biosynthesis. Functionally, lactamase-like protein; part of the gene cluster that mediates the biosynthesis of pestheic acid, a diphenyl ether which is a biosynthetic precursor of the unique chloropupukeananes. The biosynthesis initiates from condensation of acetate and malonate units catalyzed by the non-reducing PKS ptaA. As the ptaA protein is TE/CLC domain-deficient, hydrolysis and Claisen cyclization of the polyketide could be catalyzed by ptaB containing a beta-lactamase domain. The ptaB protein might hydrolyze the thioester bond between the ACP of ptaA and the intermediate to release atrochrysone carboxylic acid, which is spontaneously dehydrated to form endocrocin anthrone. Endocrocin anthrone is then converted to endocrocin, catalyzed by the anthrone oxygenase ptaC. Spontaneous decarboxylation of endocrocin occurs to generate emodin. An O-methyltransferase (ptaH or ptaI) could methylate emodin to form physcion. PtaJ could then catalyze the oxidative cleavage of physcion, and rotation of the intermediate could then afford desmethylisosulochrin. PtaF, a putative NADH-dependent oxidoreductase, might also participate in the oxidative cleavage step. Desmethylisosulochrin is then transformed by another O-methyltransferase (ptaH or ptaI) to form isosulochrin. Chlorination of isosulochrin by ptaM in the cyclohexadienone B ring then produces chloroisosulochrin. PtaE is responsible for the oxidative coupling reactions of both benzophenones isosulochrin and chloroisosulochrin to RES-1214-1 and pestheic acid respectively, regardless of chlorination. In Pestalotiopsis fici (strain W106-1 / CGMCC3.15140), this protein is Lactamase-like protein ptaB.